A 75-amino-acid polypeptide reads, in one-letter code: Exodeoxyribonuclease 7 small subunit (75 aa).

The protein belongs to the XseB family. In terms of assembly, heterooligomer composed of large and small subunits.

Its subcellular location is the cytoplasm. The enzyme catalyses Exonucleolytic cleavage in either 5'- to 3'- or 3'- to 5'-direction to yield nucleoside 5'-phosphates.. In terms of biological role, bidirectionally degrades single-stranded DNA into large acid-insoluble oligonucleotides, which are then degraded further into small acid-soluble oligonucleotides. The polypeptide is Exodeoxyribonuclease 7 small subunit (Pelobacter propionicus (strain DSM 2379 / NBRC 103807 / OttBd1)).